Reading from the N-terminus, the 480-residue chain is Protein nucleotidyltransferase YdiU (480 aa).

Positions 87, 89, 90, 110, 122, 123, 173, and 180 each coordinate ATP. Asp-249 acts as the Proton acceptor in catalysis. Residues Asn-250 and Asp-259 each coordinate Mg(2+). Asp-259 is an ATP binding site.

This sequence belongs to the SELO family. The cofactor is Mg(2+). It depends on Mn(2+) as a cofactor.

The enzyme catalyses L-seryl-[protein] + ATP = 3-O-(5'-adenylyl)-L-seryl-[protein] + diphosphate. It carries out the reaction L-threonyl-[protein] + ATP = 3-O-(5'-adenylyl)-L-threonyl-[protein] + diphosphate. The catalysed reaction is L-tyrosyl-[protein] + ATP = O-(5'-adenylyl)-L-tyrosyl-[protein] + diphosphate. It catalyses the reaction L-histidyl-[protein] + UTP = N(tele)-(5'-uridylyl)-L-histidyl-[protein] + diphosphate. The enzyme catalyses L-seryl-[protein] + UTP = O-(5'-uridylyl)-L-seryl-[protein] + diphosphate. It carries out the reaction L-tyrosyl-[protein] + UTP = O-(5'-uridylyl)-L-tyrosyl-[protein] + diphosphate. In terms of biological role, nucleotidyltransferase involved in the post-translational modification of proteins. It can catalyze the addition of adenosine monophosphate (AMP) or uridine monophosphate (UMP) to a protein, resulting in modifications known as AMPylation and UMPylation. The chain is Protein nucleotidyltransferase YdiU from Anoxybacillus flavithermus (strain DSM 21510 / WK1).